Here is a 449-residue protein sequence, read N- to C-terminus: MFQTINEISIHPELYNQKKVLIQGWITNIRGNLKIIFVELNDGSSFKNLQCVLKKEFIDFDKIENLALGVAVEISGIFSNTPERQQFGEVLVETLEIKGNNYNTNFPIQNQEISLEVLRQMPHFRHRSRLFRVIMKLRSALFFEIHKFFRRQGFINFSAPILTSNDGEGAGEVFIVDDENKDFFNKKTTLGVTGQLHAEAYALGFKKVYTFAPTFRAERSNTRRHAAEFWMIEPEVAFFTLEQIIELAVKLLQKVIKSVIIRNKDEFIFLEKAGDKNLRKRLLQFCDSQVTQISYEKAIELLLEHQEKFEEKDLFFGCDLKTEHERFLTEEIFHMPVVIINYPKNLKAFYMHQNEDGQTVAAFDLLVPGIGELIGGSQREVRYEKLLARMNELNMNIEEFQWYLDLRKYGNPGSSGFGLGFERLLMYITGIENIRDVIPFPRTNKNILM.

This sequence belongs to the class-II aminoacyl-tRNA synthetase family. In terms of assembly, homodimer.

The protein resides in the cytoplasm. The catalysed reaction is tRNA(Asn) + L-asparagine + ATP = L-asparaginyl-tRNA(Asn) + AMP + diphosphate + H(+). In Mesomycoplasma hyopneumoniae (strain 232) (Mycoplasma hyopneumoniae), this protein is Asparagine--tRNA ligase.